Here is a 519-residue protein sequence, read N- to C-terminus: Probable FAD synthase (519 aa).

The interval 17-108 (AILVIGDEIL…TDQMQFSDEI (92 aa)) is molybdenum cofactor biosynthesis protein-like. An FAD synthase region spans residues 328–485 (QIALSFNGGK…SLGGRDNTVK (158 aa)).

This sequence in the N-terminal section; belongs to the MoaB/Mog family. The protein in the C-terminal section; belongs to the PAPS reductase family. FAD1 subfamily. Requires Mg(2+) as cofactor.

The catalysed reaction is FMN + ATP + H(+) = FAD + diphosphate. The protein operates within cofactor biosynthesis; FAD biosynthesis; FAD from FMN: step 1/1. In terms of biological role, catalyzes the adenylation of flavin mononucleotide (FMN) to form flavin adenine dinucleotide (FAD) coenzyme. In Caenorhabditis elegans, this protein is Probable FAD synthase.